The following is a 165-amino-acid chain: Urease accessory protein UreE (165 aa).

The protein belongs to the UreE family.

It localises to the cytoplasm. Involved in urease metallocenter assembly. Binds nickel. Probably functions as a nickel donor during metallocenter assembly. The sequence is that of Urease accessory protein UreE from Flavobacterium johnsoniae (strain ATCC 17061 / DSM 2064 / JCM 8514 / BCRC 14874 / CCUG 350202 / NBRC 14942 / NCIMB 11054 / UW101) (Cytophaga johnsonae).